The following is a 464-amino-acid chain: tRNA modification GTPase MnmE (464 aa).

Arg29, Glu91, and Arg131 together coordinate (6S)-5-formyl-5,6,7,8-tetrahydrofolate. The TrmE-type G domain maps to 226 to 387 (GLKVALTGKP…LINYLLKKCG (162 aa)). Residue Asn236 participates in K(+) binding. GTP-binding positions include 236-241 (NVGKSS), 255-261 (TDLPGTT), and 280-283 (DTAG). Position 240 (Ser240) interacts with Mg(2+). Residues Thr255, Leu257, and Thr260 each coordinate K(+). Mg(2+) is bound at residue Thr261. (6S)-5-formyl-5,6,7,8-tetrahydrofolate is bound at residue Lys464.

It belongs to the TRAFAC class TrmE-Era-EngA-EngB-Septin-like GTPase superfamily. TrmE GTPase family. In terms of assembly, homodimer. Heterotetramer of two MnmE and two MnmG subunits. K(+) is required as a cofactor.

It localises to the cytoplasm. Its function is as follows. Exhibits a very high intrinsic GTPase hydrolysis rate. Involved in the addition of a carboxymethylaminomethyl (cmnm) group at the wobble position (U34) of certain tRNAs, forming tRNA-cmnm(5)s(2)U34. In Prochlorococcus marinus (strain NATL2A), this protein is tRNA modification GTPase MnmE.